Reading from the N-terminus, the 340-residue chain is Uroporphyrinogen decarboxylase (340 aa).

Substrate-binding positions include 21-25 (RQAGR), Phe40, Asp71, Tyr147, Ser202, and His316.

The protein belongs to the uroporphyrinogen decarboxylase family. In terms of assembly, homodimer.

The protein localises to the cytoplasm. The enzyme catalyses uroporphyrinogen III + 4 H(+) = coproporphyrinogen III + 4 CO2. Its pathway is porphyrin-containing compound metabolism; protoporphyrin-IX biosynthesis; coproporphyrinogen-III from 5-aminolevulinate: step 4/4. Its function is as follows. Catalyzes the decarboxylation of four acetate groups of uroporphyrinogen-III to yield coproporphyrinogen-III. The polypeptide is Uroporphyrinogen decarboxylase (Helicobacter hepaticus (strain ATCC 51449 / 3B1)).